The primary structure comprises 186 residues: ATP synthase subunit delta (186 aa).

The protein belongs to the ATPase delta chain family. In terms of assembly, F-type ATPases have 2 components, F(1) - the catalytic core - and F(0) - the membrane proton channel. F(1) has five subunits: alpha(3), beta(3), gamma(1), delta(1), epsilon(1). F(0) has three main subunits: a(1), b(2) and c(10-14). The alpha and beta chains form an alternating ring which encloses part of the gamma chain. F(1) is attached to F(0) by a central stalk formed by the gamma and epsilon chains, while a peripheral stalk is formed by the delta and b chains.

It is found in the cell membrane. F(1)F(0) ATP synthase produces ATP from ADP in the presence of a proton or sodium gradient. F-type ATPases consist of two structural domains, F(1) containing the extramembraneous catalytic core and F(0) containing the membrane proton channel, linked together by a central stalk and a peripheral stalk. During catalysis, ATP synthesis in the catalytic domain of F(1) is coupled via a rotary mechanism of the central stalk subunits to proton translocation. In terms of biological role, this protein is part of the stalk that links CF(0) to CF(1). It either transmits conformational changes from CF(0) to CF(1) or is implicated in proton conduction. The protein is ATP synthase subunit delta of Wolbachia pipientis wMel.